The chain runs to 558 residues: Cytochrome P450 monooxygenase sdnT (558 aa).

The helical transmembrane segment at 21-41 (IISLTTCFVCAFAVSFVALAI) threads the bilayer. The disordered stretch occupies residues 298 to 317 (QNAGSNTRPKPPKRKQDTQP). 2 N-linked (GlcNAc...) asparagine glycosylation sites follow: Asn-464 and Asn-495. Cys-505 is a binding site for heme.

The protein belongs to the cytochrome P450 family. Requires heme as cofactor.

It is found in the membrane. It functions in the pathway antibiotic biosynthesis. In terms of biological role, cytochrome P450 monooxygenase; part of the gene cluster that mediates the biosynthesis of sordarin and hypoxysordarin, glycoside antibiotics with a unique tetracyclic diterpene aglycone structure. First, the geranylgeranyl diphosphate synthase sdnC constructs GGDP from farnesyl diphosphate and isopentenyl diphosphate. The diterpene cyclase sdnA then catalyzes the cyclization of GGDP to afford cycloaraneosene. Cycloaraneosene is then hydroxylated four times by the putative cytochrome P450 monooxygenases sdnB, sdnE, sdnF and sdnH to give a hydroxylated cycloaraneosene derivative such as cycloaraneosene-8,9,13,19-tetraol. Although the order of the hydroxylations is unclear, at least C8, C9 and C13 of the cycloaraneosene skeleton are hydroxylated before the sordaricin formation. Dehydration of the 13-hydroxy group of the hydroxylated cycloaraneosene derivative might be catalyzed by an unassigned hypothetical protein such as sdnG and sdnP to construct the cyclopentadiene moiety. The FAD-dependent oxidoreductase sdnN is proposed to catalyze the oxidation at C9 of the hydroxylated cycloaraneosene derivative and also catalyze the Baeyer-Villiger oxidation to give the lactone intermediate. The presumed lactone intermediate would be hydrolyzed to give an acrolein moiety and a carboxylate moiety. Then, [4+2]cycloaddition would occur between the acrolein moiety and the cyclopentadiene moiety to give sordaricin. SdnN might also be involved in the [4+2]cycloaddition after the hypothesized oxidation to accommodate the oxidized product and prompt the [4+2]cycloaddition. GDP-6-deoxy-D-altrose may be biosynthesized from GDP-D-mannose by the putative GDP-mannose-4,6-dehydratase sdnI and the short-chain dehydrogenase sdnK. The glycosyltransferase sdnJ catalyzes the attachment of 6-deoxy-D-altrose onto the 19-hydroxy group of sordaricin to give 4'-O-demethylsordarin. The methyltransferase sdnD would complete the biosynthesis of sordarin. Sordarin can be further modified into hypoxysordarin. The unique acyl chain at the 3'-hydroxy group of hypoxysordarin would be constructed by an iterative type I PKS sdnO and the trans-acting polyketide methyltransferase sdnL. SdnL would be responsible for the introduction of an alpha-methyl group of the polyketide chain. Alternatively, the beta-lactamase-like protein sdnR might be responsible for the cleavage and transfer of the polyketide chain from the PKS sdnO to sordarin. Two putative cytochrome P450 monooxygenases, sdnQ and sdnT, might catalyze the epoxidations of the polyketide chain to complete the biosynthesis of hypoxysordarin. Transcriptional regulators sdnM and sdnS are presumably encoded for the transcriptional regulation of the expression of the sdn gene cluster. This chain is Cytochrome P450 monooxygenase sdnT, found in Sordaria araneosa (Pleurage araneosa).